The following is a 281-amino-acid chain: Thioesterase PikA5 (281 aa).

Residues 26-249 (RLVCLPHAGG…WHEICNDISD (224 aa)) are thioesterase. Residue S99 is the Nucleophile; for thioesterase activity of the active site. Residue H233 is the Proton acceptor; for thioesterase activity of the active site.

This sequence belongs to the thioesterase family.

It participates in antibiotic biosynthesis. Functionally, involved in the biosynthesis of 12- and 14-membered ring macrolactone antibiotics such as methymycin, neomethymycin, narbomycin and pikromycin. Responsible for removing mis-formed acyl moieties (aberrant decarboxylation) that are bound to the PKS and could block it. Catalyzes the cleavage of methylmalonyl-[acp]. It exhibits some acyl-group specificity, and catalyzes the cleavage of propionyl and butyryl derivatives faster than acetyl malonyl or methylmalonyl derivatives. The chain is Thioesterase PikA5 from Streptomyces venezuelae.